Consider the following 34-residue polypeptide: Photosystem I reaction center subunit XII (34 aa).

A helical transmembrane segment spans residues 11 to 31; sequence VAIAFVVALIAGIAALLLSTA.

This sequence belongs to the PsaM family. In terms of assembly, the G.violaceus PSI reaction center is composed of one copy each of PsaA,B,C,D,E,F,L,M and Z, and forms trimeric complexes.

The protein localises to the cell inner membrane. In Gloeobacter violaceus (strain ATCC 29082 / PCC 7421), this protein is Photosystem I reaction center subunit XII.